Consider the following 415-residue polypeptide: Maltose excess protein 1, chloroplastic (415 aa).

A disordered region spans residues 74–93 (SESDSDSDFPHENQQGNPGL). A run of 9 helical transmembrane segments spans residues 139–159 (ALSA…LSLL), 176–196 (LGVV…AMPI), 199–219 (FVAT…YYFG), 231–251 (DVIT…TFVP), 252–272 (LVPN…AAII), 286–306 (FVGS…PVSQ), 322–342 (SITM…ALFI), 345–365 (LMWL…NILC), and 373–393 (SQSF…LALW).

As to expression, expressed in leaves and roots. Expressed in root cap cells.

The protein localises to the plastid. The protein resides in the chloroplast inner membrane. In terms of biological role, probable maltose transporter. Essential for the conversion of starch to sucrose in leaves at night, probably via the export of maltose from the chloroplast. Required for root cap cells formation. This chain is Maltose excess protein 1, chloroplastic (MEX1), found in Arabidopsis thaliana (Mouse-ear cress).